The following is a 178-amino-acid chain: Large ribosomal subunit protein uL6 (178 aa).

The protein belongs to the universal ribosomal protein uL6 family. As to quaternary structure, part of the 50S ribosomal subunit.

This protein binds to the 23S rRNA, and is important in its secondary structure. It is located near the subunit interface in the base of the L7/L12 stalk, and near the tRNA binding site of the peptidyltransferase center. In Streptococcus equi subsp. zooepidemicus (strain H70), this protein is Large ribosomal subunit protein uL6.